A 493-amino-acid chain; its full sequence is 6-phosphogluconate dehydrogenase, decarboxylating (493 aa).

NADP(+) is bound by residues 12 to 17 (GLAVMG), 35 to 37 (NRT), 77 to 79 (VKA), and Asn-105. Substrate contacts are provided by residues Asn-105 and 131-133 (SGG). Lys-187 acts as the Proton acceptor in catalysis. 190–191 (HN) provides a ligand contact to substrate. Residue Glu-194 is the Proton donor of the active site. The substrate site is built by Tyr-195, Lys-266, Arg-293, Arg-456, and His-462.

The protein belongs to the 6-phosphogluconate dehydrogenase family. Homodimer.

It carries out the reaction 6-phospho-D-gluconate + NADP(+) = D-ribulose 5-phosphate + CO2 + NADPH. It functions in the pathway carbohydrate degradation; pentose phosphate pathway; D-ribulose 5-phosphate from D-glucose 6-phosphate (oxidative stage): step 3/3. Functionally, catalyzes the oxidative decarboxylation of 6-phosphogluconate to ribulose 5-phosphate and CO(2), with concomitant reduction of NADP to NADPH. This chain is 6-phosphogluconate dehydrogenase, decarboxylating (gnd), found in Dictyostelium discoideum (Social amoeba).